Consider the following 711-residue polypeptide: Tyrosine-protein phosphatase 2 (711 aa).

Residues 21-130 enclose the Rhodanese domain; the sequence is TESVSWIIDL…FASSHPDAIV (110 aa). Disordered regions lie at residues 275 to 306 and 329 to 376; these read APQQTPARPSLRSVPSYPSSNNQRRPSASRVR and IIPR…RANK. Polar residues-rich tracts occupy residues 290–306 and 340–363; these read SYPSSNNQRRPSASRVR and NAQNDGTSTMTSKLKPSVGLSNTR. The 266-residue stretch at 433-698 folds into the Tyrosine-protein phosphatase domain; sequence EMTRSLAFND…KFLYDVVDYL (266 aa). Residue cysteine 630 is the Phosphocysteine intermediate of the active site.

Belongs to the protein-tyrosine phosphatase family. Non-receptor class subfamily.

It localises to the cytoplasm. It catalyses the reaction O-phospho-L-tyrosyl-[protein] + H2O = L-tyrosyl-[protein] + phosphate. Its function is as follows. Plays a role in inhibiting the onset of mitosis. Dephosphorylates sty1/spc1 and wis1/spc2/sty2. This chain is Tyrosine-protein phosphatase 2 (pyp2), found in Schizosaccharomyces pombe (strain 972 / ATCC 24843) (Fission yeast).